The primary structure comprises 466 residues: Histidine--tRNA ligase (466 aa).

The protein belongs to the class-II aminoacyl-tRNA synthetase family. Homodimer.

The protein localises to the cytoplasm. It carries out the reaction tRNA(His) + L-histidine + ATP = L-histidyl-tRNA(His) + AMP + diphosphate + H(+). This is Histidine--tRNA ligase from Bifidobacterium animalis subsp. lactis (strain AD011).